The primary structure comprises 478 residues: Bifunctional protein HldE (478 aa).

Residues 1 to 318 (MKITLPDFTR…ENAIHARPES (318 aa)) form a ribokinase region. 195–198 (NLSE) lines the ATP pocket. The active site involves aspartate 264. The segment at 344–478 (MTNGVFDILH…KTIISGSGKN (135 aa)) is cytidylyltransferase.

This sequence in the N-terminal section; belongs to the carbohydrate kinase PfkB family. The protein in the C-terminal section; belongs to the cytidylyltransferase family. Homodimer.

The enzyme catalyses D-glycero-beta-D-manno-heptose 7-phosphate + ATP = D-glycero-beta-D-manno-heptose 1,7-bisphosphate + ADP + H(+). It carries out the reaction D-glycero-beta-D-manno-heptose 1-phosphate + ATP + H(+) = ADP-D-glycero-beta-D-manno-heptose + diphosphate. Its pathway is nucleotide-sugar biosynthesis; ADP-L-glycero-beta-D-manno-heptose biosynthesis; ADP-L-glycero-beta-D-manno-heptose from D-glycero-beta-D-manno-heptose 7-phosphate: step 1/4. The protein operates within nucleotide-sugar biosynthesis; ADP-L-glycero-beta-D-manno-heptose biosynthesis; ADP-L-glycero-beta-D-manno-heptose from D-glycero-beta-D-manno-heptose 7-phosphate: step 3/4. Its function is as follows. Catalyzes the phosphorylation of D-glycero-D-manno-heptose 7-phosphate at the C-1 position to selectively form D-glycero-beta-D-manno-heptose-1,7-bisphosphate. In terms of biological role, catalyzes the ADP transfer from ATP to D-glycero-beta-D-manno-heptose 1-phosphate, yielding ADP-D-glycero-beta-D-manno-heptose. The polypeptide is Bifunctional protein HldE (Erwinia tasmaniensis (strain DSM 17950 / CFBP 7177 / CIP 109463 / NCPPB 4357 / Et1/99)).